Consider the following 361-residue polypeptide: Pseudouridine-5'-phosphate glycosidase (361 aa).

The active-site Proton donor is E27. Substrate contacts are provided by K88 and V108. D140 lines the Mn(2+) pocket. 142 to 144 provides a ligand contact to substrate; it reads SAD. K161 functions as the Nucleophile in the catalytic mechanism. Residues 306 to 361 are disordered; that stretch reads DRSPTDPAAPDPTAPDPAAPDPTAPDPAAPDSAAPDLAGPDPSAPDPAAVARAHRP. Positions 312–333 are enriched in pro residues; the sequence is PAAPDPTAPDPAAPDPTAPDPA. The span at 334–354 shows a compositional bias: low complexity; sequence APDSAAPDLAGPDPSAPDPAA.

The protein belongs to the pseudouridine-5'-phosphate glycosidase family. As to quaternary structure, homotrimer. It depends on Mn(2+) as a cofactor.

It carries out the reaction D-ribose 5-phosphate + uracil = psi-UMP + H2O. Functionally, catalyzes the reversible cleavage of pseudouridine 5'-phosphate (PsiMP) to ribose 5-phosphate and uracil. Functions biologically in the cleavage direction, as part of a pseudouridine degradation pathway. This chain is Pseudouridine-5'-phosphate glycosidase, found in Frankia alni (strain DSM 45986 / CECT 9034 / ACN14a).